The sequence spans 131 residues: UPF0292 protein PF1724 (131 aa).

The Toprim domain maps to 20–103; the sequence is KGVIIVEGKR…ETRRELQFIA (84 aa). 3 residues coordinate Mg(2+): glutamate 26, aspartate 69, and aspartate 71.

This sequence belongs to the UPF0292 family. Mg(2+) serves as cofactor.

This chain is UPF0292 protein PF1724, found in Pyrococcus furiosus (strain ATCC 43587 / DSM 3638 / JCM 8422 / Vc1).